The following is a 422-amino-acid chain: 26S proteasome non-ATPase regulatory subunit 11 (422 aa).

Residue alanine 2 is modified to N-acetylalanine. Phosphoserine is present on residues serine 14 and serine 23. In terms of domain architecture, PCI spans aspartate 224 to proline 392. A Glycyl lysine isopeptide (Lys-Gly) (interchain with G-Cter in SUMO2) cross-link involves residue lysine 274.

This sequence belongs to the proteasome subunit S9 family. Component of the 19S proteasome regulatory particle complex. The 26S proteasome consists of a 20S core particle (CP) and two 19S regulatory subunits (RP). The regulatory particle is made of a lid composed of 9 subunits including PSMD11, a base containing 6 ATPases and few additional components. In terms of processing, phosphorylated by AMPK.

It is found in the nucleus. It localises to the cytoplasm. The protein resides in the cytosol. In terms of biological role, component of the 26S proteasome, a multiprotein complex involved in the ATP-dependent degradation of ubiquitinated proteins. This complex plays a key role in the maintenance of protein homeostasis by removing misfolded or damaged proteins, which could impair cellular functions, and by removing proteins whose functions are no longer required. Therefore, the proteasome participates in numerous cellular processes, including cell cycle progression, apoptosis, or DNA damage repair. In the complex, PSMD11 is required for proteasome assembly. Plays a key role in increased proteasome activity in embryonic stem cells (ESCs): its high expression in ESCs promotes enhanced assembly of the 26S proteasome, followed by higher proteasome activity. The chain is 26S proteasome non-ATPase regulatory subunit 11 (PSMD11) from Bos taurus (Bovine).